The following is a 418-amino-acid chain: Secreted aspartic protease 6 (418 aa).

The first 18 residues, 1–18, serve as a signal peptide directing secretion; the sequence is MFLKNILSVLRFALLIDA. Positions 19 to 76 are cleaved as a propeptide — activation peptide; the sequence is APVKRSPGFVTLDFNVKRSLVVPDDPTAESKRSPLFLDLDPTQIPVDDTGRNVGVDKR. In terms of domain architecture, Peptidase A1 spans 90–404; it reads YSADITVGSN…DLDDKKISMA (315 aa). The active site involves Asp108. 108 to 110 is a binding site for pepstatin A; it reads DTG. The cysteines at positions 123 and 135 are disulfide-linked. Asn138 carries an N-linked (GlcNAc...) asparagine glycan. Position 268 (Asp268) interacts with Zn(2+). Asp294 is a catalytic residue. Position 294 to 298 (294 to 298) interacts with pepstatin A; the sequence is DSGTT. An intrachain disulfide couples Cys332 to Cys370.

The protein belongs to the peptidase A1 family.

The protein localises to the secreted. The catalysed reaction is Preferential cleavage at the carboxyl of hydrophobic amino acids, but fails to cleave 15-Leu-|-Tyr-16, 16-Tyr-|-Leu-17 and 24-Phe-|-Phe-25 of insulin B chain. Activates trypsinogen, and degrades keratin.. With respect to regulation, inhibited by pepstatin A analogs. Secreted aspartic peptidases (SAPs) are a group of ten acidic hydrolases considered as key virulence factors. These enzymes supply the fungus with nutrient amino acids as well as are able to degrade the selected host's proteins involved in the immune defense. Moreover, acts toward human hemoglobin though limited proteolysis to generate a variety of antimicrobial hemocidins, enabling to compete with the other microorganisms of the same physiological niche using the microbicidal peptides generated from the host protein. This chain is Secreted aspartic protease 6, found in Candida albicans (Yeast).